The primary structure comprises 872 residues: Alanine--tRNA ligase (872 aa).

Zn(2+) contacts are provided by His567, His571, Cys669, and His673.

Belongs to the class-II aminoacyl-tRNA synthetase family. The cofactor is Zn(2+).

Its subcellular location is the cytoplasm. The catalysed reaction is tRNA(Ala) + L-alanine + ATP = L-alanyl-tRNA(Ala) + AMP + diphosphate. Catalyzes the attachment of alanine to tRNA(Ala) in a two-step reaction: alanine is first activated by ATP to form Ala-AMP and then transferred to the acceptor end of tRNA(Ala). Also edits incorrectly charged Ser-tRNA(Ala) and Gly-tRNA(Ala) via its editing domain. The protein is Alanine--tRNA ligase of Streptococcus pyogenes serotype M5 (strain Manfredo).